Here is a 742-residue protein sequence, read N- to C-terminus: MTRRSRRVAYVAKACVSCARSKQRCDGHSPCGRCSLKNLDCVYRHLLQKGQNSTRGASPQSPSASRESYSQNTLPVVQSQTRPLALDSAPSVYSPASEAIGEPPSLSTDVGNNFVEMSMDSGQETFPDGVSVNNLTFKIGESDLQGWASLGVDIPWNSSMHSMLDNPLFELPDPMAFFFQSPSELLGQSDVQAIPCPMDSEPMVHQLECETPTPNFTHSLDISSYQGQSNQTSPETTSHSSVRDDAELESWRAEDYGHVPDINDEAYQVMVFTFEQLNSDNVYCIPFTDKHLPSLQHMQIYMQVYFEEYHPIFPLLHKATFSPNKDDWLLSLAVSSIGCLFSKTLRSKEVFPIMQEFLRRAIRIQTSTPSISVAQASVLNQIGMMYGGDLRFAECAHETMAQLTTQCRKIASSSHNLANSSIAENTVSQGWQAWVRAQLEIRLFYCAWLVDSQQVGFFAFSSTIPIDFLQFPMPINEYVWGMSTAETWQNSLAEDSSSQQLTSLRQVLMGLYRYREVPGQLDAFNSLLLVMGILNDLSGLRHAHLYLEILQRRVETLPPTALTRAVMTNIHMVSLLIYFPTREVIAFGRWRVTEAQHSIVTEKLKRWMSDTRSARAALVHACSIWSQVRLSRTNSHHEPPALLYSAISIWALVEHSEEVVENADELPILRLDSLNQDVKLWAAGNEKKRLYLSGVGLLAHRGALARLISETARLLEQRIAWPQAWRTGPHLKQSYAESRRVQ.

Positions 15 to 41 form a DNA-binding region, zn(2)-C6 fungal-type; that stretch reads CVSCARSKQRCDGHSPCGRCSLKNLDC. Disordered regions lie at residues 50–80 and 218–244; these read GQNS…VQSQ and HSLD…SVRD. Over residues 218–240 the composition is skewed to polar residues; it reads HSLDISSYQGQSNQTSPETTSHS.

It localises to the nucleus. Transcription factor; part of the DMATS1 gene cluster that mediates the biosynthesis of a reversely N-prenylated monomeric L-tryptophan (r-N-DMAT). Seems not to regulate the expression of the DMATS1 cluster. This chain is Transcription factor FFUJ_09177, found in Gibberella fujikuroi (strain CBS 195.34 / IMI 58289 / NRRL A-6831) (Bakanae and foot rot disease fungus).